A 227-amino-acid polypeptide reads, in one-letter code: MMLQIPEVLTKAQVAECRAILDAGPWVDGNVTSGFQAAMAKNNEQLPQDSAEARHVGAIIVQALEANPLFVSAALPRTILSPMFNRYGEGMGFRDHVDNAIRRDPVTGQRLRTDLSCTLFLAEPEDYDGGELVVNDLYGDHVVKLAAGDAILYPSTSLHHVTTVTRGRRTASFFWIQSLIRDDARRSLLLDMDVAIQQLSRKVERDDEAILSLTGVYHNLLRQWAEV.

Residues 78–178 (TILSPMFNRY…RTASFFWIQS (101 aa)) enclose the Fe2OG dioxygenase domain. Fe cation-binding residues include His96, Asp98, and His159. Arg169 contacts 2-oxoglutarate.

Fe(2+) is required as a cofactor. L-ascorbate serves as cofactor.

The polypeptide is PKHD-type hydroxylase CC_0027 (Caulobacter vibrioides (strain ATCC 19089 / CIP 103742 / CB 15) (Caulobacter crescentus)).